Reading from the N-terminus, the 275-residue chain is Large ribosomal subunit protein uL2 (275 aa).

The disordered stretch occupies residues 223–275 (VAMNPVDHPHGGGEGRTSGGRHPVSPWGQPTKGYKTRSNKRTDKYIVRRRNKK).

The protein belongs to the universal ribosomal protein uL2 family. As to quaternary structure, part of the 50S ribosomal subunit. Forms a bridge to the 30S subunit in the 70S ribosome.

Functionally, one of the primary rRNA binding proteins. Required for association of the 30S and 50S subunits to form the 70S ribosome, for tRNA binding and peptide bond formation. It has been suggested to have peptidyltransferase activity; this is somewhat controversial. Makes several contacts with the 16S rRNA in the 70S ribosome. The chain is Large ribosomal subunit protein uL2 from Shewanella halifaxensis (strain HAW-EB4).